We begin with the raw amino-acid sequence, 687 residues long: Carboxysome assembly protein CcmM (687 aa).

Residues 242–327 form a rbcS-like repeat 1, SSUL1 region; it reads SINSDITNQI…RVVEVIIQRP (86 aa). 2 disordered regions span residues 328–355 and 442–476; these read GDVP…SAVA and VHRP…SSAG. The segment covering 335 to 346 has biased composition (polar residues); it reads SRGTTTTKALSS. A rbcS-like repeat 2, SSUL2 region spans residues 366 to 445; it reads ANQLRALLHQ…RVAEIVVHRP (80 aa). Positions 451-472 are enriched in low complexity; sequence GKPSSSSSSVGYKSAPVSSAGG. The segment at 480–562 is rbcS-like repeat 3, SSUL3; that stretch reads PEVIATVRGL…RVLEQIIQRP (83 aa). Positions 565–590 are disordered; that stretch reads NVVAGRSPSSSSASTSSSASSNGFGS. Residues 568 to 587 are compositionally biased toward low complexity; sequence AGRSPSSSSASTSSSASSNG. The rbcS-like repeat 4, SSUL4 stretch occupies residues 599-687; sequence SAVRLDNSVV…RVLETIIQRP (89 aa).

The protein belongs to the gamma-class carbonic anhydrase family. As to quaternary structure, probably forms homotrimers. Full length CcmM interacts with CcaA, CcmK1, CcmK2, CcmK4, CcmL, CcmN and itself, while the N-terminus of CcmM (first 249 residues) only interacts with CcaA, CcmM and CcmN. A probable CcmM-CcaA-CcmN complex as well as a CcaA-RuBisCO-CcmM complex can also be isolated. Interacts with full-length CcaA and the first 220 residues of CcaA; surface residues Gln-177 to Gln-188 are responsible in part for binding. Multiple forms of the protein of 73 (full length), 62, 52 (the most predominant form) and 36 kDa are seen even in the presence of protease inhibitors. CcmM52 interacts with CcaA.

It localises to the carboxysome. In terms of biological role, functions as a scaffold protein for the assembly of beta-carboxysomes, initiates carboxysome assembly via its N-terminal domain binding to CcaA, CcmK and CcmL. Binds HCO(3)-, suggesting it may play a role in the activity or regulation of bicarbonate dehydration. Also initiates carboxysome assembly by coalescing RuBisCO (ribulose bisphosphate carboxylase, rbcL-rbcS) via its SSU-like domains. Produced as a full-length and a shorter form; both forms are required for correct carboxysome assembly and growth. Despite its strong similarity to gamma-class carbonic anhydrase (CA) it does not have detectable CA activity. Functionally, beta-carboxysome assembly initiates when soluble RuBisCO is condensed into a liquid matrix in a pre-carboxysome by the RbcS-like domains of probably both forms of CcmM. CcmN interacts with the N-terminus of full length CcmM, and then recruits the shell proteins (CcmK) via CcmN's encapsulation peptide. CcmM73 also interacts with CcmK proteins and CcmL directly. Shell formation requires CcmK proteins and CcmO. CcmL caps the otherwise elongated carboxysome. Once fully encapsulated carboxysomes are formed, they migrate within the cell probably via interactions with the cytoskeleton. In Synechocystis sp. (strain ATCC 27184 / PCC 6803 / Kazusa), this protein is Carboxysome assembly protein CcmM.